The following is a 430-amino-acid chain: MKQALRVAFGFLMLWAAVLHAEVRIEITQGVDSARPIGVVPFKWAGPGAAPEDIGGIVAADLRNSGKFNPLDRSRLPQQPATAQEVQPTAWSALGIDAVIVGLVTPNPDGSYNVAYQLVDTGGAPGTVLAQNSYKVNKQWLRYAGHTASDEVFEKLTGIKGAFRTRIAYVVQTNGGQFPYELRVSDYDGYNQFVVHRSPQPLMSPAWSPDGSKLAYVTFESGRSALVIQTLANGAVRQVASFPRHNGAPAFSPDGTKLAFALSKTGSLNLYVMDLASGQIRQITDGRSNNTEPTWFPDSQTLAFTSDQAGRPQVYKMNINGGAAQRITWEGSQNQDADVSSDGKFMVMVSSNNGQQHIAKQDLVTGGVQVLSSTFLDETPSLAPNGTMVIYSSSQGMGSVLNLVSTDGRFKARLPATDGQVKSPAWSPYL.

The N-terminal stretch at 1–21 (MKQALRVAFGFLMLWAAVLHA) is a signal peptide.

Belongs to the TolB family. As to quaternary structure, the Tol-Pal system is composed of five core proteins: the inner membrane proteins TolA, TolQ and TolR, the periplasmic protein TolB and the outer membrane protein Pal. They form a network linking the inner and outer membranes and the peptidoglycan layer.

The protein resides in the periplasm. Part of the Tol-Pal system, which plays a role in outer membrane invagination during cell division and is important for maintaining outer membrane integrity. TolB occupies a key intermediary position in the Tol-Pal system because it communicates directly with both membrane-embedded components, Pal in the outer membrane and TolA in the inner membrane. The polypeptide is Tol-Pal system protein TolB (Salmonella typhi).